Here is a 149-residue protein sequence, read N- to C-terminus: Ribonuclease pancreatic (149 aa).

The first 25 residues, 1–25 (MGLEKSFILFSLLVLVLGWVQPSLG), serve as a signal peptide directing secretion. Substrate-binding residues include lysine 32 and arginine 35. Catalysis depends on histidine 37, which acts as the Proton acceptor. Intrachain disulfides connect cysteine 51–cysteine 109, cysteine 65–cysteine 120, cysteine 83–cysteine 135, and cysteine 90–cysteine 97. Substrate contacts are provided by residues 66 to 70 (KPVNT), lysine 91, and arginine 110. Catalysis depends on histidine 144, which acts as the Proton donor.

Belongs to the pancreatic ribonuclease family. Monomer. Interacts with and forms tight 1:1 complexes with RNH1. Dimerization of two such complexes may occur. Interaction with RNH1 inhibits this protein. In terms of tissue distribution, pancreas.

Its subcellular location is the secreted. It catalyses the reaction an [RNA] containing cytidine + H2O = an [RNA]-3'-cytidine-3'-phosphate + a 5'-hydroxy-ribonucleotide-3'-[RNA].. The catalysed reaction is an [RNA] containing uridine + H2O = an [RNA]-3'-uridine-3'-phosphate + a 5'-hydroxy-ribonucleotide-3'-[RNA].. In terms of biological role, endonuclease that catalyzes the cleavage of RNA on the 3' side of pyrimidine nucleotides. Acts on single-stranded and double-stranded RNA. The polypeptide is Ribonuclease pancreatic (RNASE1) (Leopoldamys edwardsi (Edwards's long-tailed giant rat)).